The chain runs to 1194 residues: F-box only protein 38 (1194 aa).

Residues 30 to 75 (MNQLSHEVLCHIFRYLPLQDIMCMECLSRKLKEAVTLYLRVVRVVD) enclose the F-box domain. The tract at residues 59–119 (KLKEAVTLYL…LHPRYLERRR (61 aa)) is interaction with KLF7. 3 consecutive short sequence motifs (nuclear export signal) follow at residues 194 to 201 (LHLVGVNV), 307 to 316 (LEVDLGYLII), and 451 to 460 (LLPSLEFISL). 4 disordered regions span residues 487–529 (ALVS…FRPD), 577–776 (EEQA…DAES), 793–879 (RTGR…RARS), and 896–915 (KPCH…STSD). Residues 493-510 (NSNNDNDNNAPNNNANLH) are compositionally biased toward low complexity. T592 carries the phosphothreonine modification. Phosphoserine occurs at positions 599, 601, and 607. Residues 599–609 (SESDDEEDSLE) show a composition bias toward acidic residues. Composition is skewed to basic and acidic residues over residues 622 to 631 (RYSEREEKTG) and 683 to 701 (IKAD…KSKD). The span at 705–728 (SCSSSSSSTAASTAGNASSPSTAS) shows a compositional bias: low complexity. 2 positions are modified to phosphoserine: S742 and S746. Residues 764–774 (EDSEAMEEGDA) are compositionally biased toward acidic residues. The segment covering 793–804 (RTGRCSDEERPS) has biased composition (basic and acidic residues). The span at 855 to 867 (SSQPESCDVQSNE) shows a compositional bias: polar residues. Residues 896 to 906 (KPCHAMKRKRT) show a composition bias toward basic residues. Residues 902–905 (KRKR) carry the Nuclear localization signal motif.

Part of the SCF (SKP1-CUL1-F-box) E3 ubiquitin-protein ligase complex SCF(FBXO38) composed of CUL1, SKP1, RBX1 and FBXO38. Interacts with KLF7. Interacts with PDCD1/PD-1. Expressed at high levels in embryo (developing brain, spinal cord, branchial arms and limbs). Widely expressed at low levels in adult tissues, with highest expression in testis. Expressed in postmeiotic spermatids.

It localises to the cytoplasm. The protein localises to the cytosol. It is found in the nucleus. It participates in protein modification; protein ubiquitination. Substrate recognition component of a SCF (SKP1-CUL1-F-box protein) E3 ubiquitin-protein ligase complex which mediates the ubiquitination and subsequent proteasomal degradation of PDCD1/PD-1, thereby regulating T-cells-mediated immunity. Required for anti-tumor activity of T-cells by promoting the degradation of PDCD1/PD-1; the PDCD1-mediated inhibitory pathway being exploited by tumors to attenuate anti-tumor immunity and facilitate tumor survival. May indirectly stimulate the activity of transcription factor KLF7, a regulator of neuronal differentiation, without promoting KLF7 ubiquitination. The polypeptide is F-box only protein 38 (Mus musculus (Mouse)).